The sequence spans 880 residues: Interference hedgehog (880 aa).

The N-terminal stretch at 1–20 (MPSIVSSLLLVVLLTSPLGA) is a signal peptide. At 21-703 (IPVLYPSPPP…SHNETFSMSP (683 aa)) the chain is on the extracellular side. Ig-like C2-type domains lie at 37-142 (PGVR…TARL), 154-235 (PVTS…STSS), 251-339 (PYLL…FIQV), and 345-432 (PQIV…LQVT). 4 disulfides stabilise this stretch: C60–C126, C172–C219, C275–C323, and C366–C414. 3 N-linked (GlcNAc...) asparagine glycosylation sites follow: N79, N102, and N208. The interval 435–468 (PIHSESTQQSDHNHSKANRGRRPAQMIPPSAPNV) is disordered. N447 and N467 each carry an N-linked (GlcNAc...) asparagine glycan. 2 consecutive Fibronectin type-III domains span residues 462-570 (PPSA…LQPG) and 578-673 (VPEM…TQRP). Positions 498, 504, 506, and 544 each coordinate heparin. N560 is a glycosylation site (N-linked (GlcNAc...) asparagine). Residues 665–699 (LKQGRTQRPMVSTTEEATLQTGVRDTTTPSHNETF) form a disordered region. Over residues 668-699 (GRTQRPMVSTTEEATLQTGVRDTTTPSHNETF) the composition is skewed to polar residues. N696 carries an N-linked (GlcNAc...) asparagine glycan. The chain crosses the membrane as a helical span at residues 704 to 724 (IVTGTIGGGAVLILFVVTTCL). The Cytoplasmic segment spans residues 725 to 880 (CMWRRRNSRA…SSGSLNSVGV (156 aa)). The segment at 797 to 880 (YFQRQPTYDY…SSGSLNSVGV (84 aa)) is disordered. Low complexity-rich tracts occupy residues 827 to 839 (RAGS…NNLN) and 864 to 880 (SSRS…SVGV).

Belongs to the immunoglobulin superfamily. IHOG family. As to quaternary structure, homodimer. Heterotetramer; 2 iHog chains bind 2 hh chains when facilitated by heparin, heparin is required to promote high-affinity interactions between hh and iHog.

The protein resides in the membrane. Its function is as follows. Mediates response to the active Hedgehog (Hh) protein signal in embryos, functioning upstream or at the level of patched (ptc). The polypeptide is Interference hedgehog (Drosophila ananassae (Fruit fly)).